The chain runs to 473 residues: Arginine biosynthesis bifunctional protein ArgJ, mitochondrial (473 aa).

The substrate site is built by threonine 201, lysine 230, threonine 241, glutamate 328, asparagine 468, and threonine 473. Catalysis depends on threonine 241, which acts as the Nucleophile.

The protein belongs to the ArgJ family. In terms of assembly, heterodimer of an alpha and a beta chain. In terms of processing, the alpha and beta chains are autoproteolytically processed from a single precursor protein within the mitochondrion.

It localises to the mitochondrion matrix. The catalysed reaction is N(2)-acetyl-L-ornithine + L-glutamate = N-acetyl-L-glutamate + L-ornithine. The enzyme catalyses L-glutamate + acetyl-CoA = N-acetyl-L-glutamate + CoA + H(+). The protein operates within amino-acid biosynthesis; L-arginine biosynthesis; L-ornithine and N-acetyl-L-glutamate from L-glutamate and N(2)-acetyl-L-ornithine (cyclic): step 1/1. It participates in amino-acid biosynthesis; L-arginine biosynthesis; N(2)-acetyl-L-ornithine from L-glutamate: step 1/4. Catalyzes two activities which are involved in the cyclic version of arginine biosynthesis: the synthesis of acetylglutamate from glutamate and acetyl-CoA, and of ornithine by transacetylation between acetylornithine and glutamate. This Blastomyces gilchristii (strain SLH14081) (Blastomyces dermatitidis) protein is Arginine biosynthesis bifunctional protein ArgJ, mitochondrial.